Reading from the N-terminus, the 142-residue chain is MAKKVVALIKLQVKAGQANPAPPVGPALGQRGLNIMEFCKAFNAATSKLEPGLPTPVIITAYSDRTFTFITKSTPASVLLKKAAGVSSGSKRPNTDKVGKVTRKQLEEIAKVKEADLTAAELEAAVRTIAGSARSMGLTVEG.

It belongs to the universal ribosomal protein uL11 family. In terms of assembly, part of the ribosomal stalk of the 50S ribosomal subunit. Interacts with L10 and the large rRNA to form the base of the stalk. L10 forms an elongated spine to which L12 dimers bind in a sequential fashion forming a multimeric L10(L12)X complex. Post-translationally, one or more lysine residues are methylated.

Its function is as follows. Forms part of the ribosomal stalk which helps the ribosome interact with GTP-bound translation factors. This Xanthomonas campestris pv. campestris (strain B100) protein is Large ribosomal subunit protein uL11.